Consider the following 87-residue polypeptide: Small ribosomal subunit protein uS17 (87 aa).

The protein belongs to the universal ribosomal protein uS17 family. In terms of assembly, part of the 30S ribosomal subunit.

In terms of biological role, one of the primary rRNA binding proteins, it binds specifically to the 5'-end of 16S ribosomal RNA. The chain is Small ribosomal subunit protein uS17 from Chromobacterium violaceum (strain ATCC 12472 / DSM 30191 / JCM 1249 / CCUG 213 / NBRC 12614 / NCIMB 9131 / NCTC 9757 / MK).